Here is a 757-residue protein sequence, read N- to C-terminus: Probable ubiquitin carboxyl-terminal hydrolase MINDY-4 (757 aa).

Disordered stretches follow at residues 152 to 173 and 190 to 334; these read FVSSKRPPHKSKPMQTVPGETP and SLDV…LPGG. Basic and acidic residues predominate over residues 190-201; that stretch reads SLDVKRMGENSR. 2 positions are modified to phosphoserine: S219 and S223. The span at 232–242 shows a compositional bias: low complexity; the sequence is SSPSSSSTQPQ. Over residues 254–277 the composition is skewed to polar residues; that stretch reads CTQQDILASSNSSPSRTSLGQLSE. S289 carries the post-translational modification Phosphoserine. Over residues 299-310 the composition is skewed to basic and acidic residues; that stretch reads PPWDRARPRDPS. C456 acts as the Nucleophile in catalysis. The Proton acceptor role is filled by H677.

This sequence belongs to the MINDY deubiquitinase family. FAM188 subfamily.

The catalysed reaction is Thiol-dependent hydrolysis of ester, thioester, amide, peptide and isopeptide bonds formed by the C-terminal Gly of ubiquitin (a 76-residue protein attached to proteins as an intracellular targeting signal).. Functionally, probable hydrolase that can remove 'Lys-48'-linked conjugated ubiquitin from proteins. The polypeptide is Probable ubiquitin carboxyl-terminal hydrolase MINDY-4 (Homo sapiens (Human)).